The following is a 649-amino-acid chain: Exolysin (649 aa).

The helical transmembrane segment at 37 to 57 (LIYTIIVLVVAAVVGLVIFIV) threads the bilayer. Residues 184–268 (KDIIDNKLRE…KKATDDFKKK (85 aa)) are a coiled coil. Basic and acidic residues predominate over residues 258 to 275 (AKKATDDFKKKKQADKNK). Residues 258–325 (AKKATDDFKK…QFQTRDSKGQ (68 aa)) are disordered. Residues 278-312 (ASKPSPGPKPAPKPSPGPKPAPKPSPGPKPSPGPS) show a composition bias toward pro residues. Residues 407–649 (GGGGGGGNVS…KNVKISKWSP (243 aa)) are catalytic.

The cofactor is Ca(2+). Mg(2+) is required as a cofactor.

The protein resides in the membrane. It localises to the virion. Inhibited by Mn(2+), Cu(2+), Co(2+), Fe(2+), Zn(2+), Ni(2+), EDTA and EGTA. Functionally, during viral entry, involved in the degradation of the host cell wall at the site of attachment. The chain is Exolysin from Chlorella (PBCV-1).